The primary structure comprises 262 residues: Hydroxyethylthiazole kinase (262 aa).

Met-43 is a substrate binding site. ATP contacts are provided by Arg-118 and Thr-164. Ala-191 serves as a coordination point for substrate.

This sequence belongs to the Thz kinase family. Requires Mg(2+) as cofactor.

It catalyses the reaction 5-(2-hydroxyethyl)-4-methylthiazole + ATP = 4-methyl-5-(2-phosphooxyethyl)-thiazole + ADP + H(+). It participates in cofactor biosynthesis; thiamine diphosphate biosynthesis; 4-methyl-5-(2-phosphoethyl)-thiazole from 5-(2-hydroxyethyl)-4-methylthiazole: step 1/1. Catalyzes the phosphorylation of the hydroxyl group of 4-methyl-5-beta-hydroxyethylthiazole (THZ). The polypeptide is Hydroxyethylthiazole kinase (Cereibacter sphaeroides (strain ATCC 17023 / DSM 158 / JCM 6121 / CCUG 31486 / LMG 2827 / NBRC 12203 / NCIMB 8253 / ATH 2.4.1.) (Rhodobacter sphaeroides)).